Here is a 226-residue protein sequence, read N- to C-terminus: 2-amino-5-formylamino-6-ribosylaminopyrimidin-4(3H)-one 5'-monophosphate deformylase (226 aa).

E29, H31, D40, and H108 together coordinate Fe cation.

It belongs to the creatininase superfamily. FAPy deformylase family. As to quaternary structure, homodimer. It depends on Fe(2+) as a cofactor. Zn(2+) is required as a cofactor.

It catalyses the reaction 2-amino-5-formylamino-6-(5-phospho-D-ribosylamino)pyrimidin-4(3H)-one + H2O = 2,5-diamino-6-(1-D-ribosylamino)pyrimidin-4(3H)-one 5'-phosphate + formate + H(+). Its pathway is cofactor biosynthesis; coenzyme F420 biosynthesis. It participates in cofactor biosynthesis; riboflavin biosynthesis. In terms of biological role, catalyzes the hydrolysis of the formamide of 2-amino-5-formylamino-6-ribosylamino-4(3H)-pyrimidinone 5'-monophosphate (FAPy) to form 2,5-diamino-6-ribosylamino-4(3H)-pyrimidinone 5'-phosphate (APy). The sequence is that of 2-amino-5-formylamino-6-ribosylaminopyrimidin-4(3H)-one 5'-monophosphate deformylase from Methanocaldococcus vulcanius (strain ATCC 700851 / DSM 12094 / M7) (Methanococcus vulcanius).